A 418-amino-acid polypeptide reads, in one-letter code: Serum response factor homolog A (418 aa).

4 disordered regions span residues 14-67 (LGNV…GKKA), 144-170 (CLNT…LLQQ), 301-351 (RLGK…NNNS), and 388-418 (SSSS…FPPC). 2 stretches are compositionally biased toward low complexity: residues 22 to 39 (PSSP…PTST) and 51 to 61 (TSEPSSPSTGE). Residues 67–127 (AGRRKIKIEF…GHVYTFATAK (61 aa)) enclose the MADS-box domain. 3 stretches are compositionally biased toward low complexity: residues 150 to 170 (NPNS…LLQQ), 306 to 351 (NNNN…NNNS), and 388 to 399 (SSSSASSSPASP). Residues 400 to 418 (NQFNYSNHSMPLNNQFPPC) are compositionally biased toward polar residues.

Its subcellular location is the nucleus. Functionally, required for proper slug migration, spore differentiation and stalk differentiation (under nonbuffered conditions). Could be involved in late events of spore maturation necessary for spore stability. The chain is Serum response factor homolog A (srfA) from Dictyostelium discoideum (Social amoeba).